The following is a 623-amino-acid chain: Chaperone protein HtpG (623 aa).

The interval 1 to 341 is a; substrate-binding; the sequence is MEKREFKAES…SQDLSLNISR (341 aa). Residues 342-549 are b; sequence EMLQHDRQLS…EGEVSIEMEK (208 aa). Residues 550-623 form a c region; sequence ILSAMPNNQG…FTNDICKLMK (74 aa).

This sequence belongs to the heat shock protein 90 family. Homodimer.

It localises to the cytoplasm. Molecular chaperone. Has ATPase activity. This is Chaperone protein HtpG from Clostridium perfringens (strain 13 / Type A).